The sequence spans 60 residues: Small ribosomal subunit protein eS31 (60 aa).

Zn(2+) is bound by residues C24, C27, C42, and C45. The segment at 24–45 (CPRCGPGVFMADHGNRYACGRC) adopts a C4-type zinc-finger fold.

Belongs to the eukaryotic ribosomal protein eS31 family. Part of the 30S ribosomal subunit. It depends on Zn(2+) as a cofactor.

The protein is Small ribosomal subunit protein eS31 of Methanopyrus kandleri (strain AV19 / DSM 6324 / JCM 9639 / NBRC 100938).